We begin with the raw amino-acid sequence, 758 residues long: 1-phosphatidylinositol 4,5-bisphosphate phosphodiesterase delta-4 (758 aa).

The region spanning 16-124 (QLMQAGSPMR…WIQGLEKLIE (109 aa)) is the PH domain. The interval 26 to 53 (KVKSRSWKKQRYFKLQEDCMTIWYNSKK) is substrate binding. EF-hand domains are found at residues 134 to 169 (LMDQWICDWFQKADKNKDGRMNFKEVQDLLKMMNVD), 170 to 205 (MSEHHAFRLFQMADKSESGTLEGEEFVLFYKALTQR), and 206 to 237 (DEVLKIFQDFSKDGKKLTLLEFVDFLQQGQLE). The Ca(2+) site is built by Asp147, Asn149, Asp151, Arg153, Glu158, Asp183, Ser185, Ser187, Thr189, and Glu194. The GBA motif lies at 213-243 (QDFSKDGKKLTLLEFVDFLQQGQLEEENTEE). The PI-PLC X-box domain occupies 290 to 435 (QDMMQPLCHY…LRGKILLKGK (146 aa)). His305 is an active-site residue. Ca(2+)-binding residues include Asn306, Glu335, and Asp337. Residue His350 is part of the active site. Residue Glu384 coordinates Ca(2+). Substrate contacts are provided by Lys433 and Lys435. Positions 446-468 (EQPDDSLGEVSDEEENIEVEEER) are enriched in acidic residues. Residues 446–479 (EQPDDSLGEVSDEEENIEVEEERNEDKKRAKKSK) form a disordered region. The region spanning 486–602 (LSDCVIYCKS…GYVLKPSFMR (117 aa)) is the PI-PLC Y-box domain. 2 residues coordinate substrate: Ser515 and Arg542. A C2 domain is found at 602-731 (RHVETTFNPD…SGYRHIHLLS (130 aa)). Ca(2+) is bound by residues Ile645, Asp647, Asn671, Asp700, Tyr701, and Asp702. Positions 726–729 (HIHL) match the PDZ-binding motif.

Ca(2+) is required as a cofactor.

The protein resides in the membrane. It localises to the nucleus. It is found in the cytoplasm. Its subcellular location is the endoplasmic reticulum. It carries out the reaction a 1,2-diacyl-sn-glycero-3-phospho-(1D-myo-inositol-4,5-bisphosphate) + H2O = 1D-myo-inositol 1,4,5-trisphosphate + a 1,2-diacyl-sn-glycerol + H(+). The catalysed reaction is a 1,2-diacyl-sn-glycero-3-phospho-(1D-myo-inositol) + H2O = 1D-myo-inositol 1-phosphate + a 1,2-diacyl-sn-glycerol + H(+). In terms of biological role, hydrolyzes the phosphatidylinositol 4,5-bisphosphate (PIP2) to generate 2 second messenger molecules diacylglycerol (DAG) and inositol 1,4,5-trisphosphate (IP3). DAG mediates the activation of protein kinase C (PKC), while IP3 releases Ca(2+) from intracellular stores. The polypeptide is 1-phosphatidylinositol 4,5-bisphosphate phosphodiesterase delta-4 (plcd4) (Xenopus laevis (African clawed frog)).